The chain runs to 89 residues: Small ribosomal subunit protein uS14A (89 aa).

Belongs to the universal ribosomal protein uS14 family. As to quaternary structure, part of the 30S ribosomal subunit. Contacts proteins S3 and S10.

Its function is as follows. Binds 16S rRNA, required for the assembly of 30S particles and may also be responsible for determining the conformation of the 16S rRNA at the A site. This chain is Small ribosomal subunit protein uS14A, found in Staphylococcus aureus (strain MRSA252).